Consider the following 60-residue polypeptide: Potassium channel toxin-like Tx677 (60 aa).

Residues 1 to 22 (MKISALVMITLLICSMMILCQG) form the signal peptide. 3 disulfide bridges follow: Cys30-Cys51, Cys36-Cys56, and Cys40-Cys58.

Belongs to the short scorpion toxin superfamily. Potassium channel inhibitor family. In terms of tissue distribution, expressed by the venom gland.

The protein resides in the secreted. Its function is as follows. Weakly inhibits Kv11.1/KCNH2/ERG1, Kv1.2/KCNA2 and Kv1.3/KCNA3 voltage-gated potassium channels. The polypeptide is Potassium channel toxin-like Tx677 (Buthus israelis (Israeli scorpion)).